The sequence spans 52 residues: uncharacterized protein (52 aa).

Positions M1–F52 are disordered. Residues K7–P30 show a composition bias toward basic and acidic residues.

This is an uncharacterized protein from Dictyostelium discoideum (Social amoeba).